We begin with the raw amino-acid sequence, 2241 residues long: Large tegument protein deneddylase (2241 aa).

The interval 1 to 238 (MKVTQASCHQ…IDLTGVVRES (238 aa)) is deubiquitination activity. The Peptidase C76 domain maps to 4-226 (TQASCHQGDI…AARLVSTYRD (223 aa)). Residues Cys24, Asp160, and His162 contribute to the active site. Residues 239–314 (ADTAATTTTA…STTSKTLATA (76 aa)) form a disordered region. The span at 240–250 (DTAATTTTAAP) shows a compositional bias: low complexity. A compositionally biased stretch (pro residues) spans 251–268 (SLPPLPDPIVDPGCPPGV). The span at 304–314 (PSTTSKTLATA) shows a compositional bias: low complexity. An interaction with inner tegument protein region spans residues 327-331 (SSAVP). Positions 1170–1229 (RSSQQKMEEQLQETRQQMTETSERLDRSLRQDPGSSSVTRVPEKPFKGQELAGRITPPPA) are disordered. Positions 1190 to 1199 (TSERLDRSLR) are enriched in basic and acidic residues.

Belongs to the herpesviridae large tegument protein family. In terms of assembly, interacts with host CUL1 and CUL4A; these interactions inhibit the E3 ligase activity of cullins. Interacts with inner tegument protein. Interacts with capsid vertex specific component CVC2. Interacts with the major capsid protein/MCP.

Its subcellular location is the virion tegument. The protein resides in the host cytoplasm. It localises to the host nucleus. It carries out the reaction Thiol-dependent hydrolysis of ester, thioester, amide, peptide and isopeptide bonds formed by the C-terminal Gly of ubiquitin (a 76-residue protein attached to proteins as an intracellular targeting signal).. In terms of biological role, large tegument protein that plays multiple roles in the viral cycle. During viral entry, remains associated with the capsid while most of the tegument is detached and participates in the capsid transport toward the host nucleus. Plays a role in the routing of the capsid at the nuclear pore complex and subsequent uncoating. Within the host nucleus, acts as a deneddylase and promotes the degradation of nuclear CRLs (cullin-RING ubiquitin ligases) and thereby stabilizes nuclear CRL substrates, while cytoplasmic CRLs remain unaffected. These modifications prevent host cell cycle S-phase progression and create a favorable environment allowing efficient viral genome replication. Participates later in the secondary envelopment of capsids. Indeed, plays a linker role for the association of the outer viral tegument to the capsids together with the inner tegument protein. This chain is Large tegument protein deneddylase (UL48), found in Human cytomegalovirus (strain AD169) (HHV-5).